A 419-amino-acid polypeptide reads, in one-letter code: Putative nickel insertion protein (419 aa).

Residues 69–90 (HDPSNHPSQNTHHHHHHHTRHL) form a disordered region. A compositionally biased stretch (basic residues) spans 79–88 (THHHHHHHTR).

The protein belongs to the LarC family.

The sequence is that of Putative nickel insertion protein from Rippkaea orientalis (strain PCC 8801 / RF-1) (Cyanothece sp. (strain PCC 8801)).